The primary structure comprises 359 residues: Protein-L-isoaspartate O-methyltransferase domain-containing protein 2 (359 aa).

Residue Gly-2 is the site of N-myristoyl glycine attachment. Ser-64 is a catalytic residue. AdoMet binding motif stretches follow at residues 85–94 (LNLGSGTGYL), 160–164 (YDRVY), and 181–191 (LKVGGILVMPL). A BC-box region spans residues 240–250 (VRSLQDLARLA). A disordered region spans residues 301–328 (SNPSDDTSCEDAEEDRREVAERTLQETK). Over residues 314 to 328 (EDRREVAERTLQETK) the composition is skewed to basic and acidic residues. Residues 343–346 (LPLP) are CUL-box.

It belongs to the methyltransferase superfamily. L-isoaspartyl/D-aspartyl protein methyltransferase family.

Its subcellular location is the cytoplasm. Functionally, may act as a substrate recognition component of an ECS (Elongin BC-CUL5-SOCS-box protein) E3 ubiquitin ligase complex which mediates the ubiquitination and subsequent proteasomal degradation of target proteins. May bind to the methyltransferase cofactor S-adenosylmethionine (AdoMet) via the N-terminal AdoMet binding motif, but probably does not display methyltransferase activity. This is Protein-L-isoaspartate O-methyltransferase domain-containing protein 2 (Pcmtd2) from Mus musculus (Mouse).